The primary structure comprises 62 residues: Large ribosomal subunit protein bL28 (62 aa).

Residues 1-24 are disordered; it reads MARKCVITGRKTKAGNNRSHAMNS. The segment covering 14–24 has biased composition (polar residues); the sequence is AGNNRSHAMNS.

The protein belongs to the bacterial ribosomal protein bL28 family.

This chain is Large ribosomal subunit protein bL28, found in Bacillus pumilus (strain SAFR-032).